The chain runs to 232 residues: 5'-methylthioadenosine/S-adenosylhomocysteine nucleosidase (232 aa).

Glu14 acts as the Proton acceptor in catalysis. Substrate-binding positions include Gly80, Val154, and 175–176 (ME). Asp199 serves as the catalytic Proton donor.

Belongs to the PNP/UDP phosphorylase family. MtnN subfamily.

The catalysed reaction is S-adenosyl-L-homocysteine + H2O = S-(5-deoxy-D-ribos-5-yl)-L-homocysteine + adenine. It carries out the reaction S-methyl-5'-thioadenosine + H2O = 5-(methylsulfanyl)-D-ribose + adenine. The enzyme catalyses 5'-deoxyadenosine + H2O = 5-deoxy-D-ribose + adenine. Its pathway is amino-acid biosynthesis; L-methionine biosynthesis via salvage pathway; S-methyl-5-thio-alpha-D-ribose 1-phosphate from S-methyl-5'-thioadenosine (hydrolase route): step 1/2. Its function is as follows. Catalyzes the irreversible cleavage of the glycosidic bond in both 5'-methylthioadenosine (MTA) and S-adenosylhomocysteine (SAH/AdoHcy) to adenine and the corresponding thioribose, 5'-methylthioribose and S-ribosylhomocysteine, respectively. Also cleaves 5'-deoxyadenosine, a toxic by-product of radical S-adenosylmethionine (SAM) enzymes, into 5-deoxyribose and adenine. The sequence is that of 5'-methylthioadenosine/S-adenosylhomocysteine nucleosidase from Actinobacillus pleuropneumoniae serotype 3 (strain JL03).